The chain runs to 205 residues: DNA-directed RNA polymerase RPB5 homolog (205 aa).

The protein belongs to the archaeal RpoH/eukaryotic RPB5 RNA polymerase subunit family. Part of the viral DNA-directed RNA polymerase that consists of 8 polII-like subunits (RPB1, RPB2, RPB3, RPB5, RPB6, RPB7, RPB9, RPB10), a capping enzyme and a termination factor.

The protein localises to the host cytoplasm. It is found in the virion. In terms of biological role, component of the DNA-directed RNA polymerase (RNAP) that catalyzes the transcription in the cytoplasm of viral DNA into RNA using the four ribonucleoside triphosphates as substrates. This is DNA-directed RNA polymerase RPB5 homolog from Ornithodoros (relapsing fever ticks).